Here is a 149-residue protein sequence, read N- to C-terminus: Putative pre-16S rRNA nuclease (149 aa).

It belongs to the YqgF nuclease family.

The protein localises to the cytoplasm. Its function is as follows. Could be a nuclease involved in processing of the 5'-end of pre-16S rRNA. In Burkholderia ambifaria (strain MC40-6), this protein is Putative pre-16S rRNA nuclease.